We begin with the raw amino-acid sequence, 198 residues long: Imidazoleglycerol-phosphate dehydratase (198 aa).

The protein belongs to the imidazoleglycerol-phosphate dehydratase family.

Its subcellular location is the cytoplasm. It carries out the reaction D-erythro-1-(imidazol-4-yl)glycerol 3-phosphate = 3-(imidazol-4-yl)-2-oxopropyl phosphate + H2O. It participates in amino-acid biosynthesis; L-histidine biosynthesis; L-histidine from 5-phospho-alpha-D-ribose 1-diphosphate: step 6/9. In Magnetococcus marinus (strain ATCC BAA-1437 / JCM 17883 / MC-1), this protein is Imidazoleglycerol-phosphate dehydratase.